Consider the following 336-residue polypeptide: DNA polymerase III subunit delta' (336 aa).

As to quaternary structure, DNA polymerase III contains a core (composed of alpha, epsilon and theta chains) that associates with a tau subunit. This core dimerizes to form the POLIII' complex. PolIII' associates with the gamma complex (composed of gamma, delta, delta', psi and chi chains) and with the beta chain to form the complete DNA polymerase III complex.

It catalyses the reaction DNA(n) + a 2'-deoxyribonucleoside 5'-triphosphate = DNA(n+1) + diphosphate. In terms of biological role, DNA polymerase III is a complex, multichain enzyme responsible for most of the replicative synthesis in bacteria. This DNA polymerase also exhibits 3' to 5' exonuclease activity. The polypeptide is DNA polymerase III subunit delta' (holB) (Buchnera aphidicola subsp. Baizongia pistaciae (strain Bp)).